The following is a 228-amino-acid chain: tRNA (guanine-N(1)-)-methyltransferase (228 aa).

S-adenosyl-L-methionine-binding positions include Gly111 and 135–140 (LGDYVL).

The protein belongs to the RNA methyltransferase TrmD family. In terms of assembly, homodimer.

It is found in the cytoplasm. It carries out the reaction guanosine(37) in tRNA + S-adenosyl-L-methionine = N(1)-methylguanosine(37) in tRNA + S-adenosyl-L-homocysteine + H(+). In terms of biological role, specifically methylates guanosine-37 in various tRNAs. The chain is tRNA (guanine-N(1)-)-methyltransferase from Clavibacter sepedonicus (Clavibacter michiganensis subsp. sepedonicus).